The following is a 278-amino-acid chain: Digeranylgeranylglyceryl phosphate synthase (278 aa).

The next 8 membrane-spanning stretches (helical) occupy residues 12–32, 34–54, 91–111, 129–149, 153–173, 204–224, 225–245, and 257–277; these read LKNC…ASYF, LATV…CGFG, LLVF…LMAV, IIGN…GGIA, IDVT…REII, FLLV…FFGI, YYML…YNLV, and SRNI…GSLF.

The protein belongs to the UbiA prenyltransferase family. DGGGP synthase subfamily. It depends on Mg(2+) as a cofactor.

The protein localises to the cell membrane. The enzyme catalyses sn-3-O-(geranylgeranyl)glycerol 1-phosphate + (2E,6E,10E)-geranylgeranyl diphosphate = 2,3-bis-O-(geranylgeranyl)-sn-glycerol 1-phosphate + diphosphate. It functions in the pathway membrane lipid metabolism; glycerophospholipid metabolism. In terms of biological role, prenyltransferase that catalyzes the transfer of the geranylgeranyl moiety of geranylgeranyl diphosphate (GGPP) to the C2 hydroxyl of (S)-3-O-geranylgeranylglyceryl phosphate (GGGP). This reaction is the second ether-bond-formation step in the biosynthesis of archaeal membrane lipids. In Methanococcus maripaludis (strain C7 / ATCC BAA-1331), this protein is Digeranylgeranylglyceryl phosphate synthase.